The sequence spans 468 residues: Immunoglobulin superfamily member 21 (468 aa).

A signal peptide spans 1–24 (MQAAPSLRRASCLLLAAILDLARG). The Ig-like 1 domain occupies 25–132 (YLTVNIEPLP…RATREKVVLA (108 aa)). Cys46 and Cys116 are joined by a disulfide. N-linked (GlcNAc...) asparagine glycosylation is found at Asn82, Asn165, and Asn407. Residues 344 to 429 (PKIMMTPSRA…GSTDTHTRLI (86 aa)) enclose the Ig-like 2 domain.

Interacts (Ig-like 1 domain) with NRXN2 (via Laminin G-like 1 domain) in a trans-interaction manner. Expressed in brain (at protein levels). Highly expressed in the pyramidal cell layer of the dorsal and ventral hippocampal CA1 and CA3 regions, layers 5 and 6 of the cortex, the thalamus and the pons and weakly expressed in the cerebellum. Expressed in neurons but not in glia.

The protein localises to the postsynaptic cell membrane. Involved in synaptic inhibition in the brain. Selectively regulates inhibitory presynaptic differentiation through interacting with presynaptic NRXN2. The chain is Immunoglobulin superfamily member 21 (Igsf21) from Mus musculus (Mouse).